Reading from the N-terminus, the 96-residue chain is DNA-directed RNA polymerase subunit Rpo11 (96 aa).

It belongs to the archaeal Rpo11/eukaryotic RPB11/RPC19 RNA polymerase subunit family. As to quaternary structure, part of the RNA polymerase complex.

It is found in the cytoplasm. It catalyses the reaction RNA(n) + a ribonucleoside 5'-triphosphate = RNA(n+1) + diphosphate. Functionally, DNA-dependent RNA polymerase (RNAP) catalyzes the transcription of DNA into RNA using the four ribonucleoside triphosphates as substrates. In Methanococcus maripaludis (strain DSM 14266 / JCM 13030 / NBRC 101832 / S2 / LL), this protein is DNA-directed RNA polymerase subunit Rpo11.